The chain runs to 498 residues: ATP synthase subunit beta, chloroplastic (498 aa).

Residue 172–179 (GGAGVGKT) participates in ATP binding.

Belongs to the ATPase alpha/beta chains family. As to quaternary structure, F-type ATPases have 2 components, CF(1) - the catalytic core - and CF(0) - the membrane proton channel. CF(1) has five subunits: alpha(3), beta(3), gamma(1), delta(1), epsilon(1). CF(0) has four main subunits: a(1), b(1), b'(1) and c(9-12).

It is found in the plastid. It localises to the chloroplast thylakoid membrane. The enzyme catalyses ATP + H2O + 4 H(+)(in) = ADP + phosphate + 5 H(+)(out). Produces ATP from ADP in the presence of a proton gradient across the membrane. The catalytic sites are hosted primarily by the beta subunits. The sequence is that of ATP synthase subunit beta, chloroplastic from Balaka seemannii.